A 105-amino-acid chain; its full sequence is Thioredoxin (105 aa).

A Thioredoxin domain is found at 2–105; that stretch reads VKQIDSKDAF…KLEATINEFV (104 aa). Lys-3 is modified (N6-acetyllysine). Lys-8 carries the post-translational modification N6-succinyllysine. Residues Cys-32 and Cys-35 each act as nucleophile in the active site. Cys-32 and Cys-35 form a disulfide bridge. Lys-39 carries the N6-acetyllysine modification. Cys-62 and Cys-69 each carry S-nitrosocysteine. Cys-73 carries the post-translational modification S-nitrosocysteine; alternate. Lys-94 carries the post-translational modification N6-acetyllysine; alternate. At Lys-94 the chain carries N6-succinyllysine; alternate.

The protein belongs to the thioredoxin family. In terms of assembly, homodimer; disulfide-linked. Interacts with TXNIP through the redox-active site. Interacts with MAP3K5 and CASP3. Interacts with APEX1; the interaction stimulates the FOS/JUN AP-1 DNA-binding activity in a redox-dependent manner. In terms of processing, in the fully reduced protein, both Cys-69 and Cys-73 are nitrosylated in response to nitric oxide (NO). When two disulfide bonds are present in the protein, only Cys-73 is nitrosylated. Cys-73 can serve as donor for nitrosylation of target proteins.

The protein localises to the nucleus. It is found in the cytoplasm. The protein resides in the secreted. Functionally, participates in various redox reactions through the reversible oxidation of its active center dithiol to a disulfide and catalyzes dithiol-disulfide exchange reactions. Plays a role in the reversible S-nitrosylation of cysteine residues in target proteins, and thereby contributes to the response to intracellular nitric oxide. Nitrosylates the active site Cys of CASP3 in response to nitric oxide (NO), and thereby inhibits caspase-3 activity. Induces the FOS/JUN AP-1 DNA binding activity in ionizing radiation (IR) cells through its oxidation/reduction status and stimulates AP-1 transcriptional activity. The sequence is that of Thioredoxin (TXN) from Callithrix jacchus (White-tufted-ear marmoset).